We begin with the raw amino-acid sequence, 248 residues long: Coproheme decarboxylase (248 aa).

Residues Arg-130, Tyr-144, 144–148 (YPMDK), Lys-148, His-171, Gln-184, and Ser-222 each bind Fe-coproporphyrin III. The active site involves Tyr-144.

The protein belongs to the ChdC family. Type 1 subfamily. Homopentamer. Fe-coproporphyrin III is required as a cofactor.

The catalysed reaction is Fe-coproporphyrin III + 2 H2O2 + 2 H(+) = heme b + 2 CO2 + 4 H2O. The enzyme catalyses Fe-coproporphyrin III + H2O2 + H(+) = harderoheme III + CO2 + 2 H2O. It carries out the reaction harderoheme III + H2O2 + H(+) = heme b + CO2 + 2 H2O. It participates in porphyrin-containing compound metabolism; protoheme biosynthesis. Functionally, involved in coproporphyrin-dependent heme b biosynthesis. Catalyzes the decarboxylation of Fe-coproporphyrin III (coproheme) to heme b (protoheme IX), the last step of the pathway. The reaction occurs in a stepwise manner with a three-propionate harderoheme intermediate. The protein is Coproheme decarboxylase of Geobacillus stearothermophilus (strain DSM 13240 / CIP 106956 / 10).